The chain runs to 309 residues: Mitochondrial substrate carrier family protein ancA (309 aa).

Solcar repeat units lie at residues 10–102 (SSFV…YKKF), 114–203 (KFFI…AKGI), and 216–299 (ASWG…IQKL). A run of 5 helical transmembrane segments spans residues 12 to 41 (FVKDSLIGGTAGGVSKTIVAPIERVKLLLQ), 79 to 103 (LANVIRYFPTQALNFAFKDKYKKFF), 113 to 133 (TKFFIGNLLSGGAAGATSLLF), 181 to 201 (VSVGGIFVYRAAFFGGYDTAK), and 215 to 235 (WASWGIAQVVTTIAGVVSYPF). ADP contacts are provided by Arg-84 and Lys-96. Arg-239 contributes to the ADP binding site. The segment at 239–244 (RRRMMM) is important for transport activity. The Nucleotide carrier signature motif motif lies at 239 to 244 (RRRMMM). The helical transmembrane segment at 276 to 293 (ALSNAIRGSGGALVLVIY) threads the bilayer.

Belongs to the mitochondrial carrier (TC 2.A.29) family. Monomer.

Its subcellular location is the mitochondrion inner membrane. The enzyme catalyses ADP(in) + ATP(out) = ADP(out) + ATP(in). The matrix-open state (m-state) is inhibited by the membrane-permeable bongkrekic acid (BKA). The cytoplasmic-open state (c-state) is inhibited by the membrane-impermeable toxic inhibitor carboxyatractyloside (CATR). ADP:ATP antiporter that mediates import of ADP into the mitochondrial matrix for ATP synthesis, and export of ATP out to fuel the cell. Cycles between the cytoplasmic-open state (c-state) and the matrix-open state (m-state): operates by the alternating access mechanism with a single substrate-binding site intermittently exposed to either the cytosolic (c-state) or matrix (m-state) side of the inner mitochondrial membrane. This Dictyostelium discoideum (Social amoeba) protein is Mitochondrial substrate carrier family protein ancA (ancA).